A 290-amino-acid chain; its full sequence is Arylamine N-acetyltransferase 2 (290 aa).

Residue C68 is the Acyl-thioester intermediate of the active site. S103 and G104 together coordinate CoA. Residue 106–107 coordinates substrate; it reads IH. Active-site residues include H107 and D122. Y208 provides a ligand contact to CoA.

Belongs to the arylamine N-acetyltransferase family.

It localises to the cytoplasm. It carries out the reaction an arylamine + acetyl-CoA = an N-acetylarylamine + CoA. The catalysed reaction is an N-hydroxyarylamine + acetyl-CoA = an N-acetoxyarylamine + CoA. Its function is as follows. Catalyzes the N- or O-acetylation of various arylamine and heterocyclic amine substrates, and participates in the detoxification of a plethora of hydrazine and arylamine drugs. The chain is Arylamine N-acetyltransferase 2 (Nat2) from Mus musculus (Mouse).